The chain runs to 401 residues: MKEKIVLAYSGGLDTSVAVKWLLDKGYDVVACCLDVGEGKDLELVHQKALDMGAIECHIIDATEEFSQDYVSYAIKGNLMYEGTYPLVSALSRPLISKKLVEIASKTNSVGIAHGCTGKGNDQVRFEVAIKALDPELKVFAPVREWAWSREEEIDYAIKHNIPVPIQHDSPYSIDQNLWGRSNECGILEDPYATPPKDAYDLTNELEDAPDEAEEIVLSFEKGIPVSLDGTAYKLSELILELNKLAGKHGVGRIDHVENRLVGIKSREVYETPAAEVIMNAHKALETITLTKDVAHFKPVIEKQFSEQIYNGLWFSPLTDSLKIFVDSTQAHVTGDVRLKLYKGNAIVNGRQSPYTLYNEKLATYTKEDAFNQESAVGFIDIFGLPTKVNSMLHGGYKDEQ.

Residue 8–16 coordinates ATP; that stretch reads AYSGGLDTS. Y85 contributes to the L-citrulline binding site. G115 is an ATP binding site. L-aspartate contacts are provided by T117, N121, and D122. N121 serves as a coordination point for L-citrulline. L-citrulline is bound by residues R125, S173, S182, E258, and Y270.

The protein belongs to the argininosuccinate synthase family. Type 1 subfamily. In terms of assembly, homotetramer.

Its subcellular location is the cytoplasm. It catalyses the reaction L-citrulline + L-aspartate + ATP = 2-(N(omega)-L-arginino)succinate + AMP + diphosphate + H(+). Its pathway is amino-acid biosynthesis; L-arginine biosynthesis; L-arginine from L-ornithine and carbamoyl phosphate: step 2/3. The sequence is that of Argininosuccinate synthase from Staphylococcus saprophyticus subsp. saprophyticus (strain ATCC 15305 / DSM 20229 / NCIMB 8711 / NCTC 7292 / S-41).